Reading from the N-terminus, the 257-residue chain is MTLAVRVIPCLDVDAGRVVKGVNFENLRDAGDPVELAAAYDAQGADELTFLDVTASTSDRGTMLDVVSRTAEQVFIPLTVGGGVRTVADVDRLLRAGADKVSVNTAAIARPELLKELSERFGSQCIVLSVDARTVPQGQPDTPSGWEVTTHGGKRGTGIDAVEWAERGAELGVGEILLNSMDADGTKAGFDLLMIRAVRAAVHVPVIASGGAGLVEHFAPAVEAGADAVLAASVFHFGDLSIPEVKDAMRAEGIVVR.

Active-site residues include Asp-12 and Asp-131.

The protein belongs to the HisA/HisF family. In terms of assembly, heterodimer of HisH and HisF.

It is found in the cytoplasm. It carries out the reaction 5-[(5-phospho-1-deoxy-D-ribulos-1-ylimino)methylamino]-1-(5-phospho-beta-D-ribosyl)imidazole-4-carboxamide + L-glutamine = D-erythro-1-(imidazol-4-yl)glycerol 3-phosphate + 5-amino-1-(5-phospho-beta-D-ribosyl)imidazole-4-carboxamide + L-glutamate + H(+). The protein operates within amino-acid biosynthesis; L-histidine biosynthesis; L-histidine from 5-phospho-alpha-D-ribose 1-diphosphate: step 5/9. Its function is as follows. IGPS catalyzes the conversion of PRFAR and glutamine to IGP, AICAR and glutamate. The HisF subunit catalyzes the cyclization activity that produces IGP and AICAR from PRFAR using the ammonia provided by the HisH subunit. The sequence is that of Imidazole glycerol phosphate synthase subunit HisF from Rhodococcus erythropolis (strain PR4 / NBRC 100887).